A 573-amino-acid polypeptide reads, in one-letter code: Anti-Muellerian hormone type-2 receptor (573 aa).

The N-terminal stretch at 1 to 17 (MLGSLGLWALLPTAVEA) is a signal peptide. The Extracellular portion of the chain corresponds to 18-149 (PPNRRTCVFF…APGESIWMAL (132 aa)). Cystine bridges form between Cys55–Cys79 and Cys92–Cys109. Residue Asn66 is glycosylated (N-linked (GlcNAc...) asparagine). An N-linked (GlcNAc...) asparagine glycan is attached at Asn119. Residues 150 to 170 (VLLGLFLLLLLLLGSIILALL) form a helical membrane-spanning segment. Topologically, residues 171–573 (QRKNYRVRGE…PQPACTLSPV (403 aa)) are cytoplasmic. Residues 203 to 518 (LCFSQVIREG…AHPQESHPFP (316 aa)) enclose the Protein kinase domain. Residues 209-217 (IREGGHAVV) and Lys230 each bind ATP. The active-site Proton acceptor is the Asp333.

The protein belongs to the protein kinase superfamily. TKL Ser/Thr protein kinase family. TGFB receptor subfamily. Interacts with type I receptor ACVR1. It depends on Mg(2+) as a cofactor. Mn(2+) serves as cofactor.

The protein localises to the membrane. It carries out the reaction L-threonyl-[receptor-protein] + ATP = O-phospho-L-threonyl-[receptor-protein] + ADP + H(+). The enzyme catalyses L-seryl-[receptor-protein] + ATP = O-phospho-L-seryl-[receptor-protein] + ADP + H(+). Functionally, on ligand binding, forms a receptor complex consisting of two type II and two type I transmembrane serine/threonine kinases. Type II receptors phosphorylate and activate type I receptors which autophosphorylate, then bind and activate SMAD transcriptional regulators. Receptor for anti-Muellerian hormone. This is Anti-Muellerian hormone type-2 receptor (AMHR2) from Homo sapiens (Human).